Reading from the N-terminus, the 268-residue chain is Mediator of RNA polymerase II transcription subunit 18 (268 aa).

Belongs to the Mediator complex subunit 18 family. In terms of assembly, component of the Mediator complex.

It localises to the nucleus. Component of the Mediator complex, a coactivator involved in the regulated transcription of nearly all RNA polymerase II-dependent genes. Mediator functions as a bridge to convey information from gene-specific regulatory proteins to the basal RNA polymerase II transcription machinery. Mediator is recruited to promoters by direct interactions with regulatory proteins and serves as a scaffold for the assembly of a functional preinitiation complex with RNA polymerase II and the general transcription factors. In Neosartorya fischeri (strain ATCC 1020 / DSM 3700 / CBS 544.65 / FGSC A1164 / JCM 1740 / NRRL 181 / WB 181) (Aspergillus fischerianus), this protein is Mediator of RNA polymerase II transcription subunit 18 (srb5).